Here is a 99-residue protein sequence, read N- to C-terminus: Ferredoxin, heterocyst (99 aa).

The 2Fe-2S ferredoxin-type domain occupies 4–96 (YQVRLINKKQ…NCTIKTHQEP (93 aa)). Residues C42, C47, C50, and C80 each coordinate [2Fe-2S] cluster.

It belongs to the 2Fe2S plant-type ferredoxin family. [2Fe-2S] cluster is required as a cofactor.

In terms of biological role, ferredoxins are iron-sulfur proteins that transfer electrons in a wide variety of metabolic reactions. Donates electrons to the nitrogenase. The chain is Ferredoxin, heterocyst (fdxH) from Nostoc sp. (strain PCC 7120 / SAG 25.82 / UTEX 2576).